The chain runs to 58 residues: UPF0391 membrane protein Sfri_4000 (58 aa).

Helical transmembrane passes span 6-26 (LMFL…IAGA) and 27-47 (AAGI…ISLV).

It belongs to the UPF0391 family.

It is found in the cell membrane. The chain is UPF0391 membrane protein Sfri_4000 from Shewanella frigidimarina (strain NCIMB 400).